Reading from the N-terminus, the 210-residue chain is Leucyl/phenylalanyl-tRNA--protein transferase (210 aa).

It belongs to the L/F-transferase family.

It is found in the cytoplasm. It carries out the reaction N-terminal L-lysyl-[protein] + L-leucyl-tRNA(Leu) = N-terminal L-leucyl-L-lysyl-[protein] + tRNA(Leu) + H(+). The enzyme catalyses N-terminal L-arginyl-[protein] + L-leucyl-tRNA(Leu) = N-terminal L-leucyl-L-arginyl-[protein] + tRNA(Leu) + H(+). The catalysed reaction is L-phenylalanyl-tRNA(Phe) + an N-terminal L-alpha-aminoacyl-[protein] = an N-terminal L-phenylalanyl-L-alpha-aminoacyl-[protein] + tRNA(Phe). Its function is as follows. Functions in the N-end rule pathway of protein degradation where it conjugates Leu, Phe and, less efficiently, Met from aminoacyl-tRNAs to the N-termini of proteins containing an N-terminal arginine or lysine. This is Leucyl/phenylalanyl-tRNA--protein transferase from Deinococcus radiodurans (strain ATCC 13939 / DSM 20539 / JCM 16871 / CCUG 27074 / LMG 4051 / NBRC 15346 / NCIMB 9279 / VKM B-1422 / R1).